A 246-amino-acid polypeptide reads, in one-letter code: Small ribosomal subunit protein uS2 (246 aa).

Belongs to the universal ribosomal protein uS2 family.

The polypeptide is Small ribosomal subunit protein uS2 (Stutzerimonas stutzeri (strain A1501) (Pseudomonas stutzeri)).